We begin with the raw amino-acid sequence, 286 residues long: ATP synthase gamma chain (286 aa).

Belongs to the ATPase gamma chain family. In terms of assembly, F-type ATPases have 2 components, CF(1) - the catalytic core - and CF(0) - the membrane proton channel. CF(1) has five subunits: alpha(3), beta(3), gamma(1), delta(1), epsilon(1). CF(0) has three main subunits: a, b and c.

It localises to the cell inner membrane. Produces ATP from ADP in the presence of a proton gradient across the membrane. The gamma chain is believed to be important in regulating ATPase activity and the flow of protons through the CF(0) complex. This is ATP synthase gamma chain from Shewanella sp. (strain ANA-3).